A 131-amino-acid chain; its full sequence is Insulin-like 3 (131 aa).

The signal sequence occupies residues 1 to 20 (MDPRLPAWALVLLGPALVFA). Disulfide bonds link cysteine 34–cysteine 116, cysteine 46–cysteine 129, and cysteine 115–cysteine 120. A propeptide spans 58 to 104 (PATGGDRELLQWLERRHLLHGLVADSNLTLGPGLQPLPQTSHHHRHH) (c peptide like).

Belongs to the insulin family. As to quaternary structure, heterodimer of a B chain and an A chain linked by two disulfide bonds. As to expression, expressed in prenatal and postnatal Leydig cells. Found as well in the corpus luteum, trophoblast, fetal membranes and breast.

Its subcellular location is the secreted. Functionally, seems to play a role in testicular function. May be a trophic hormone with a role in testicular descent in fetal life. Is a ligand for LGR8 receptor. The chain is Insulin-like 3 (INSL3) from Homo sapiens (Human).